The chain runs to 312 residues: Porphobilinogen deaminase (312 aa).

Position 241 is an S-(dipyrrolylmethanemethyl)cysteine (cysteine 241).

This sequence belongs to the HMBS family. In terms of assembly, monomer. Requires dipyrromethane as cofactor.

It catalyses the reaction 4 porphobilinogen + H2O = hydroxymethylbilane + 4 NH4(+). It participates in porphyrin-containing compound metabolism; protoporphyrin-IX biosynthesis; coproporphyrinogen-III from 5-aminolevulinate: step 2/4. It functions in the pathway porphyrin-containing compound metabolism; chlorophyll biosynthesis. Its function is as follows. Tetrapolymerization of the monopyrrole PBG into the hydroxymethylbilane pre-uroporphyrinogen in several discrete steps. The polypeptide is Porphobilinogen deaminase (hemC) (Chlorobaculum parvum (strain DSM 263 / NCIMB 8327) (Chlorobium vibrioforme subsp. thiosulfatophilum)).